Consider the following 141-residue polypeptide: ATP synthase epsilon chain (141 aa).

The protein belongs to the ATPase epsilon chain family. F-type ATPases have 2 components, CF(1) - the catalytic core - and CF(0) - the membrane proton channel. CF(1) has five subunits: alpha(3), beta(3), gamma(1), delta(1), epsilon(1). CF(0) has three main subunits: a, b and c.

The protein localises to the cell membrane. In terms of biological role, produces ATP from ADP in the presence of a proton gradient across the membrane. This Mycoplasma mobile (strain ATCC 43663 / 163K / NCTC 11711) (Mesomycoplasma mobile) protein is ATP synthase epsilon chain.